The chain runs to 553 residues: Threonylcarbamoyladenosine tRNA methylthiotransferase (553 aa).

Positions 21-61 (SAEDVKPQERYQNKKSVTVRAKKRVQIKPETDAEEKPTPRP) are disordered. 2 stretches are compositionally biased toward basic and acidic residues: residues 23-32 (EDVKPQERYQ) and 47-58 (IKPETDAEEKPT). Positions 72 to 179 (QKVFVKTWGC…VVEVVEETLK (108 aa)) constitute an MTTase N-terminal domain. Residues C81, C116, C145, C221, C225, and C228 each coordinate [4Fe-4S] cluster. In terms of domain architecture, Radical SAM core spans 207–438 (RKNPLIEIIS…DLFYSYEPYA (232 aa)). One can recognise a TRAM domain in the interval 438–500 (AQRVGEMYTV…KFSMVGEILD (63 aa)). A helical membrane pass occupies residues 533–553 (VGIALVVGSLAFLLQLLIRFL).

The protein belongs to the methylthiotransferase family. CDKAL1 subfamily. Requires [4Fe-4S] cluster as cofactor.

It is found in the membrane. It catalyses the reaction N(6)-L-threonylcarbamoyladenosine(37) in tRNA + (sulfur carrier)-SH + AH2 + 2 S-adenosyl-L-methionine = 2-methylsulfanyl-N(6)-L-threonylcarbamoyladenosine(37) in tRNA + (sulfur carrier)-H + 5'-deoxyadenosine + L-methionine + A + S-adenosyl-L-homocysteine + 2 H(+). Functionally, catalyzes the methylthiolation of N6-threonylcarbamoyladenosine (t(6)A), leading to the formation of 2-methylthio-N6-threonylcarbamoyladenosine (ms(2)t(6)A) at position 37 in tRNAs that read codons beginning with adenine. This Drosophila pseudoobscura pseudoobscura (Fruit fly) protein is Threonylcarbamoyladenosine tRNA methylthiotransferase.